We begin with the raw amino-acid sequence, 196 residues long: Protein/nucleic acid deglycase 3 (196 aa).

The active-site Nucleophile is the Cys-106. Cys-106 bears the Cysteine sulfinic acid (-SO2H); alternate mark.

This sequence belongs to the peptidase C56 family. As to quaternary structure, homodimer. Post-translationally, cys-106 is easily oxidized to sulfinic acid.

The catalysed reaction is N(omega)-(1-hydroxy-2-oxopropyl)-L-arginyl-[protein] + H2O = lactate + L-arginyl-[protein] + H(+). It carries out the reaction N(6)-(1-hydroxy-2-oxopropyl)-L-lysyl-[protein] + H2O = lactate + L-lysyl-[protein] + H(+). It catalyses the reaction S-(1-hydroxy-2-oxopropyl)-L-cysteinyl-[protein] + H2O = lactate + L-cysteinyl-[protein] + H(+). The enzyme catalyses N(omega)-(1-hydroxy-2-oxoethyl)-L-arginyl-[protein] + H2O = L-arginyl-[protein] + glycolate + H(+). The catalysed reaction is N(6)-(1-hydroxy-2-oxoethyl)-L-lysyl-[protein] + H2O = glycolate + L-lysyl-[protein] + H(+). It carries out the reaction S-(1-hydroxy-2-oxoethyl)-L-cysteinyl-[protein] + H2O = glycolate + L-cysteinyl-[protein] + H(+). It catalyses the reaction N(2)-(1-hydroxy-2-oxopropyl)-dGTP + H2O = lactate + dGTP + H(+). The enzyme catalyses N(2)-(1-hydroxy-2-oxopropyl)-GTP + H2O = lactate + GTP + H(+). The catalysed reaction is N(2)-(1-hydroxy-2-oxopropyl)-GDP + H2O = lactate + GDP + H(+). It carries out the reaction N(2)-(1-hydroxy-2-oxopropyl)-GMP + H2O = lactate + GMP + H(+). It catalyses the reaction N(2)-(1-hydroxy-2-oxoethyl)-dGTP + H2O = dGTP + glycolate + H(+). The enzyme catalyses N(2)-(1-hydroxy-2-oxoethyl)-GTP + H2O = glycolate + GTP + H(+). The catalysed reaction is N(2)-(1-hydroxy-2-oxoethyl)-GDP + H2O = glycolate + GDP + H(+). It carries out the reaction N(2)-(1-hydroxy-2-oxoethyl)-GMP + H2O = glycolate + GMP + H(+). It catalyses the reaction an N(2)-(1-hydroxy-2-oxopropyl)-guanosine in RNA + H2O = a guanosine in RNA + lactate + H(+). The enzyme catalyses an N(2)-(1-hydroxy-2-oxopropyl)-2'-deoxyguanosine in DNA + H2O = a 2'-deoxyguanosine in DNA + lactate + H(+). The catalysed reaction is an N(2)-(1-hydroxy-2-oxoethyl)-guanosine in RNA + H2O = a guanosine in RNA + glycolate + H(+). It carries out the reaction an N(2)-(1-hydroxy-2-oxoethyl)-2'-deoxyguanosine in DNA + H2O = a 2'-deoxyguanosine in DNA + glycolate + H(+). Glyoxalase activity is inhibited by zinc ions. Active as a chaperone in both its reduced and oxidized states, and is more active in its oxidized form. Functionally, protein and nucleotide deglycase that catalyzes the deglycation of the Maillard adducts formed between amino groups of proteins or nucleotides and reactive carbonyl groups of glyoxals. Thus, functions as a protein deglycase that repairs methylglyoxal- and glyoxal-glycated proteins, and releases repaired proteins and lactate or glycolate, respectively. Deglycates cysteine, arginine and lysine residues in proteins, and thus reactivates these proteins by reversing glycation by glyoxals. Is able to repair glycated serum albumin, collagen, glyceraldehyde-3-phosphate dehydrogenase, and fructose biphosphate aldolase. Acts on early glycation intermediates (hemithioacetals and aminocarbinols), preventing the formation of Schiff bases and advanced glycation endproducts (AGE) that cause irreversible damage. Also functions as a nucleotide deglycase able to repair glycated guanine in the free nucleotide pool (GTP, GDP, GMP, dGTP) and in DNA and RNA. Is thus involved in a major nucleotide repair system named guanine glycation repair (GG repair), dedicated to reversing methylglyoxal and glyoxal damage via nucleotide sanitization and direct nucleic acid repair. However, is less efficient than Hsp31 and YhbO, suggesting that YajL might be preferentially dedicated to protein repair. Displays a covalent chaperone activity with sulfenylated thiol proteins by forming mixed disulfides with members of the thiol proteome, and preferentially with sulfenylated cellular proteins, upon oxidative stress; these mixed disulfides can be subsequently reduced by low-molecular-weight thiols to regenerate YajL and reduced proteins. Involved in biogenesis of ribosomal proteins, probably as a ribosomal protein-folding chaperone. Confers resistance to oxidative stress. Plays an important role in protection against electrophile/carbonyl stress. The chaperone activity reported for YajL is probably recruited to execute its deglycase activity, to interact with non-native glycated proteins and gain access to partially buried glycated sites. Also displays an apparent glyoxalase activity that in fact reflects its deglycase activity. In Escherichia coli (strain K12), this protein is Protein/nucleic acid deglycase 3 (yajL).